We begin with the raw amino-acid sequence, 507 residues long: MKRALLSVSDKTGLVSFAKGLIDRGFELVSTGGTHRELAAAGIAVTSVEEVTGFPEMLDGRVKTLHPKIHAGILARRDDPAHMEALADHDIQPVDLVCVNLYPFAATIKRPDVTRAEAIEQIDIGGPSALRAAAKNSDSVWAVVDPADYEAVLTGLDQDDAHLRQKLAAKVFAITAAYDAQIVHYLDPEPFPEHFTPTYTKRQDLRYGENSHQQAAFYVEPDPNPTSLAAAKQLHGKELSYNNIKDADAALAMLREFSEPAVVAVKHMNPCGIGLGKTIEGAWDKAYAADPMSIFGGIIALNRPVDLATAEKMHKLFLEIIMAPAFDDDAYAVLAKKKNVRLLTINTADTPAELGTETTAIYGGLLIQARDNQTETPADLTVVTTVKPTDEQLKALAFAQTVVKHVKSNAIVVAQADQTLGIGAGQMNRIGSVELALTQAQQNDNFAGAVMASDAFFPMDDCVDYAAKHDIKAIIQPGGSIRDKDSIEKANQYGIAMVTTGVRHFRH.

The 144-residue stretch at 1–144 (MKRALLSVSD…KNSDSVWAVV (144 aa)) folds into the MGS-like domain.

The protein belongs to the PurH family.

The catalysed reaction is (6R)-10-formyltetrahydrofolate + 5-amino-1-(5-phospho-beta-D-ribosyl)imidazole-4-carboxamide = 5-formamido-1-(5-phospho-D-ribosyl)imidazole-4-carboxamide + (6S)-5,6,7,8-tetrahydrofolate. It carries out the reaction IMP + H2O = 5-formamido-1-(5-phospho-D-ribosyl)imidazole-4-carboxamide. It functions in the pathway purine metabolism; IMP biosynthesis via de novo pathway; 5-formamido-1-(5-phospho-D-ribosyl)imidazole-4-carboxamide from 5-amino-1-(5-phospho-D-ribosyl)imidazole-4-carboxamide (10-formyl THF route): step 1/1. Its pathway is purine metabolism; IMP biosynthesis via de novo pathway; IMP from 5-formamido-1-(5-phospho-D-ribosyl)imidazole-4-carboxamide: step 1/1. This Lacticaseibacillus paracasei (strain ATCC 334 / BCRC 17002 / CCUG 31169 / CIP 107868 / KCTC 3260 / NRRL B-441) (Lactobacillus paracasei) protein is Bifunctional purine biosynthesis protein PurH.